Consider the following 2098-residue polypeptide: 1-phosphatidylinositol 3-phosphate 5-kinase (2098 aa).

The disordered stretch occupies residues 1-45 (MATDDKTSPTLDSANDLPRSPTSPSHLTHFKPLTPDQDEPPFKSA). An N-acetylalanine modification is found at alanine 2. Residues serine 23 and serine 48 each carry the phosphoserine; by autocatalysis modification. Residues 57–123 (KERAEGGQGE…EPTFGGHDPR (67 aa)) are disordered. Over residues 66 to 88 (EQQPLSGSWTSPQLPSRTQSVRS) the composition is skewed to polar residues. The residue at position 88 (serine 88) is a Phosphoserine. The segment at 158-218 (DSQCKECYDC…ACTYCRKIAL (61 aa)) adopts an FYVE-type zinc-finger fold. 8 residues coordinate Zn(2+): cysteine 164, cysteine 167, cysteine 180, cysteine 183, cysteine 188, cysteine 191, cysteine 210, and cysteine 213. A disordered region spans residues 292-329 (VQEDAGKSPARNRSASITNLSLDRSGSPMVPSYETSVS). Phosphoserine occurs at positions 299, 307, and 312. Positions 302–315 (RNRSASITNLSLDR) are enriched in polar residues. A Phosphoserine; by PKB/AKT1 or PKB/AKT2 modification is found at serine 318. At serine 329 the chain carries Phosphoserine. A DEP domain is found at 365–440 (HSSGMEFQDH…DEYALYRPLQ (76 aa)). Residues 442 to 459 (TEFSETPSPDSDSVNSVE) are compositionally biased toward polar residues. The disordered stretch occupies residues 442 to 469 (TEFSETPSPDSDSVNSVEGHSEPSWFKD). Over residues 460 to 469 (GHSEPSWFKD) the composition is skewed to basic and acidic residues. Serine 475 carries the post-translational modification Phosphoserine. Positions 484 to 505 (GDDNLANSASPSKRTSVSSFQS) are disordered. Over residues 488–505 (LANSASPSKRTSVSSFQS) the composition is skewed to polar residues. Positions 616 to 868 (MMALLQQLLH…MICVAYHSQL (253 aa)) are chaperonin-like domain. Disordered stretches follow at residues 1161-1191 (RIQP…NEGD) and 1512-1616 (FQQE…STDS). Residues 1177–1186 (SSTSSGQSGS) are compositionally biased toward low complexity. Phosphoserine; by autocatalysis is present on serine 1522. Residues serine 1544 and serine 1549 each carry the phosphoserine modification. Positions 1562-1578 (LTTLSSQSSTSSTHLQL) are enriched in low complexity. Residue serine 1669 is modified to Phosphoserine; by autocatalysis. Residues 1692-1799 (QWNSAEEGLP…PQDEVDGGDT (108 aa)) are disordered. Low complexity predominate over residues 1704–1714 (STSDSRPKSSS). A compositionally biased stretch (polar residues) spans 1723-1735 (GGQTNRTTETEPQ). The residue at position 1754 (serine 1754) is a Phosphoserine. Residues 1758-2084 (SSQKRETLRG…RFCEAMDKYF (327 aa)) enclose the PIPK domain. A catalytic region spans residues 1842–2098 (EEDFIRSLSH…DHWTGLGLNC (257 aa)). Serine 1969 and serine 2053 each carry phosphoserine; by autocatalysis.

Component of the PI(3,5)P2 regulatory complex/PAS complex, at least composed of PIKFYVE, FIG4 and VAC14. VAC14 nucleates the assembly of the complex and serves as a scaffold by pentamerizing into a star-shaped structure, which can bind a single copy each of PIKFYVE and FIG4 and coordinates their activities. Interacts (via chaperonin-like domain) with RABEPK; the interaction recruits RABEPK to the endosomal membrane. Interacts with SPAG9. Interacts with EGFR. Autophosphorylates which inhibits its own phosphatidylinositol 3-phosphate 5-kinase activity, stimulates FIG4 lipid phosphatase activity and down-regulates lipid product formation. Dephosphorylated by FIG4 in the PI(3,5)P2 regulatory complex, at Ser-48, Ser-1669 and Ser-2053. Phosphorylated in response to insulin at Ser-318 in a protein kinase B (PKB)-dependent manner.

The protein localises to the endosome membrane. It is found in the early endosome membrane. It localises to the cytoplasmic vesicle. The protein resides in the phagosome membrane. Its subcellular location is the late endosome membrane. It carries out the reaction a 1,2-diacyl-sn-glycero-3-phospho-(1D-myo-inositol-3-phosphate) + ATP = a 1,2-diacyl-sn-glycero-3-phospho-(1D-myo-inositol-3,5-bisphosphate) + ADP + H(+). The catalysed reaction is a 1,2-diacyl-sn-glycero-3-phospho-(1D-myo-inositol) + ATP = a 1,2-diacyl-sn-glycero-3-phospho-(1D-myo-inositol-5-phosphate) + ADP + H(+). The enzyme catalyses L-seryl-[protein] + ATP = O-phospho-L-seryl-[protein] + ADP + H(+). Inhibited by apilimod and YM201636. Functionally, dual specificity kinase implicated in myriad essential cellular processes such as maintenance of endomembrane homeostasis, and endocytic-vacuolar pathway, lysosomal trafficking, nuclear transport, stress- or hormone-induced signaling and cell cycle progression. The PI(3,5)P2 regulatory complex regulates both the synthesis and turnover of phosphatidylinositol 3,5-bisphosphate (PtdIns(3,5)P2). Sole enzyme to catalyze the phosphorylation of phosphatidylinositol 3-phosphate on the fifth hydroxyl of the myo-inositol ring, to form (PtdIns(3,5)P2). Also catalyzes the phosphorylation of phosphatidylinositol on the fifth hydroxyl of the myo-inositol ring, to form phosphatidylinositol 5-phosphate (PtdIns(5)P). Has serine-protein kinase activity and is able to autophosphorylate and transphosphorylate. Autophosphorylation inhibits its own phosphatidylinositol 3-phosphate 5-kinase activity, stimulates FIG4 lipid phosphatase activity and down-regulates lipid product formation. Involved in key endosome operations such as fission and fusion in the course of endosomal cargo transport. Required for the maturation of early into late endosomes, phagosomes and lysosomes. Regulates vacuole maturation and nutrient recovery following engulfment of macromolecules, initiates the redistribution of accumulated lysosomal contents back into the endosome network. Critical regulator of the morphology, degradative activity, and protein turnover of the endolysosomal system in macrophages and platelets. In neutrophils, critical to perform chemotaxis, generate ROS, and undertake phagosome fusion with lysosomes. Plays a key role in the processing and presentation of antigens by major histocompatibility complex class II (MHC class II) mediated by CTSS. Regulates melanosome biogenesis by controlling the delivery of proteins from the endosomal compartment to the melanosome. Essential for systemic glucose homeostasis, mediates insulin-induced signals for endosome/actin remodeling in the course of GLUT4 translocation/glucose uptake activation. Supports microtubule-based endosome-to-trans-Golgi network cargo transport, through association with SPAG9 and RABEPK. Mediates EGFR trafficking to the nucleus. Its function is as follows. (Microbial infection) Required for cell entry of coronaviruses SARS-CoV and SARS-CoV-2, as well as human coronavirus EMC (HCoV-EMC) by endocytosis. In Homo sapiens (Human), this protein is 1-phosphatidylinositol 3-phosphate 5-kinase.